The following is a 128-amino-acid chain: Saitohin (128 aa).

Positions 77 to 87 (SYSSEENSRNG) are enriched in polar residues. Residues 77-128 (SYSSEENSRNGAEQGRQLSIEGPFQGQNCPSHPAAALPLPMRGESQATSCQV) are disordered.

As to quaternary structure, interacts with PRDX6.

Its subcellular location is the cytoplasm. The protein resides in the nucleus. This is Saitohin (STH) from Pan troglodytes (Chimpanzee).